The sequence spans 681 residues: Phosphomethylpyrimidine synthase (681 aa).

The segment covering 1–13 has biased composition (polar residues); it reads MSNNTTSLPAENS. The tract at residues 1-29 is disordered; the sequence is MSNNTTSLPAENSSHPRKGTPIRKKQREE. The segment covering 15-25 has biased composition (basic residues); that stretch reads HPRKGTPIRKK. Substrate contacts are provided by residues Asn254, Met283, Tyr312, His348, 368–370, 409–412, and Glu448; these read SRG and DGLR. Residue His452 coordinates Zn(2+). Residue Tyr475 coordinates substrate. Residue His516 coordinates Zn(2+). The [4Fe-4S] cluster site is built by Cys596, Cys599, and Cys604. A compositionally biased stretch (basic and acidic residues) spans 658 to 667; sequence FRSRGSELYH. The segment at 658–681 is disordered; sequence FRSRGSELYHRPANLSAEANNEPT.

This sequence belongs to the ThiC family. Homodimer. It depends on [4Fe-4S] cluster as a cofactor.

The catalysed reaction is 5-amino-1-(5-phospho-beta-D-ribosyl)imidazole + S-adenosyl-L-methionine = 4-amino-2-methyl-5-(phosphooxymethyl)pyrimidine + CO + 5'-deoxyadenosine + formate + L-methionine + 3 H(+). Its pathway is cofactor biosynthesis; thiamine diphosphate biosynthesis. Catalyzes the synthesis of the hydroxymethylpyrimidine phosphate (HMP-P) moiety of thiamine from aminoimidazole ribotide (AIR) in a radical S-adenosyl-L-methionine (SAM)-dependent reaction. The protein is Phosphomethylpyrimidine synthase of Yersinia pseudotuberculosis serotype I (strain IP32953).